Here is a 268-residue protein sequence, read N- to C-terminus: 4-diphosphocytidyl-2-C-methyl-D-erythritol kinase (268 aa).

Lys-9 is an active-site residue. 88–98 (PPGAGLGGGSS) is an ATP binding site. The active site involves Asp-130.

This sequence belongs to the GHMP kinase family. IspE subfamily.

The enzyme catalyses 4-CDP-2-C-methyl-D-erythritol + ATP = 4-CDP-2-C-methyl-D-erythritol 2-phosphate + ADP + H(+). It participates in isoprenoid biosynthesis; isopentenyl diphosphate biosynthesis via DXP pathway; isopentenyl diphosphate from 1-deoxy-D-xylulose 5-phosphate: step 3/6. Functionally, catalyzes the phosphorylation of the position 2 hydroxy group of 4-diphosphocytidyl-2C-methyl-D-erythritol. This Aquifex aeolicus (strain VF5) protein is 4-diphosphocytidyl-2-C-methyl-D-erythritol kinase.